The primary structure comprises 241 residues: DnaA regulatory inactivator Hda (241 aa).

This sequence belongs to the DnaA family. HdA subfamily. As to quaternary structure, the active form seems to be an ADP-bound monomer. Forms the RIDA complex (regulatory inactivation of DnaA) of ATP-DnaA, ADP-Hda and the DNA-loaded beta sliding clamp (dnaN).

Functionally, mediates the interaction of DNA replication initiator protein DnaA with DNA polymerase subunit beta sliding clamp (dnaN). Stimulates hydrolysis of ATP-DnaA to ADP-DnaA, rendering DnaA inactive for reinitiation, a process called regulatory inhibition of DnaA or RIDA. This Citrobacter koseri (strain ATCC BAA-895 / CDC 4225-83 / SGSC4696) protein is DnaA regulatory inactivator Hda.